A 439-amino-acid polypeptide reads, in one-letter code: 23S rRNA (uracil(1939)-C(5))-methyltransferase RlmD (439 aa).

The TRAM domain occupies 10–68 (QKKLRAAFTTIVQDLDYQGLGVAKIQGKTWFIENALPQEQVQVQVIEEKRQYGLGRVQK). Residues Cys-81, Cys-87, Cys-90, and Cys-168 each coordinate [4Fe-4S] cluster. Residues Gln-271, Phe-300, Asn-305, Glu-321, Asp-348, and Asp-369 each contribute to the S-adenosyl-L-methionine site. The active-site Nucleophile is the Cys-395.

The protein belongs to the class I-like SAM-binding methyltransferase superfamily. RNA M5U methyltransferase family. RlmD subfamily.

The catalysed reaction is uridine(1939) in 23S rRNA + S-adenosyl-L-methionine = 5-methyluridine(1939) in 23S rRNA + S-adenosyl-L-homocysteine + H(+). Functionally, catalyzes the formation of 5-methyl-uridine at position 1939 (m5U1939) in 23S rRNA. In Histophilus somni (strain 129Pt) (Haemophilus somnus), this protein is 23S rRNA (uracil(1939)-C(5))-methyltransferase RlmD.